The primary structure comprises 540 residues: Putative laccase-11 (540 aa).

Plastocyanin-like domains lie at 1–114 (MATV…PPRG), 124–279 (REVP…YYGA), and 389–523 (NFPA…NDGP). Positions 48, 50, 93, and 95 each coordinate Cu cation. Cu cation is bound by residues His440, His443, His445, His502, Cys503, His504, and His508.

The protein belongs to the multicopper oxidase family. It depends on Cu cation as a cofactor.

The protein localises to the secreted. It localises to the extracellular space. The protein resides in the apoplast. It carries out the reaction 4 hydroquinone + O2 = 4 benzosemiquinone + 2 H2O. Its function is as follows. Lignin degradation and detoxification of lignin-derived products. The sequence is that of Putative laccase-11 (LAC11) from Oryza sativa subsp. japonica (Rice).